The sequence spans 172 residues: Type IV secretion system putative outer membrane lipoprotein BMEII0036 (172 aa).

The first 15 residues, 1-15, serve as a signal peptide directing secretion; sequence MRTLVMVACAVSLAA. Cys16 carries N-palmitoyl cysteine lipidation. A lipid anchor (S-diacylglycerol cysteine) is attached at Cys16. Residues 58–172 form the OmpA-like domain; that stretch reads WPARPPKQTV…RRVDIEILRK (115 aa).

The protein localises to the cell outer membrane. This Brucella melitensis biotype 1 (strain ATCC 23456 / CCUG 17765 / NCTC 10094 / 16M) protein is Type IV secretion system putative outer membrane lipoprotein BMEII0036.